The sequence spans 390 residues: S-adenosylmethionine synthase 2 (390 aa).

Glutamate 9 is a Mg(2+) binding site. ATP is bound at residue histidine 15. Glutamate 43 provides a ligand contact to K(+). 2 residues coordinate L-methionine: glutamate 56 and glutamine 99. ATP is bound by residues 167–169 (DGK), 235–238 (SGRF), aspartate 246, 252–253 (RK), alanine 269, lysine 273, and lysine 277. Aspartate 246 serves as a coordination point for L-methionine. Residue lysine 277 coordinates L-methionine.

The protein belongs to the AdoMet synthase family. In terms of assembly, homotetramer. Requires Mn(2+) as cofactor. Mg(2+) is required as a cofactor. The cofactor is Co(2+). It depends on K(+) as a cofactor.

The protein localises to the cytoplasm. The catalysed reaction is L-methionine + ATP + H2O = S-adenosyl-L-methionine + phosphate + diphosphate. It functions in the pathway amino-acid biosynthesis; S-adenosyl-L-methionine biosynthesis; S-adenosyl-L-methionine from L-methionine: step 1/1. Functionally, catalyzes the formation of S-adenosylmethionine from methionine and ATP. The reaction comprises two steps that are both catalyzed by the same enzyme: formation of S-adenosylmethionine (AdoMet) and triphosphate, and subsequent hydrolysis of the triphosphate. The protein is S-adenosylmethionine synthase 2 (SAMS2) of Nicotiana tabacum (Common tobacco).